The following is a 386-amino-acid chain: Vesicle-associated protein 2-2 (386 aa).

At Met1 the chain carries N-acetylmethionine. Over 1–363 (MNMPLLDIQP…TKKIVKEVHN (363 aa)) the chain is Cytoplasmic. In terms of domain architecture, MSP spans 5–125 (LLDIQPRTLQ…EENKLRVTLV (121 aa)). Residue Ser279 is modified to Phosphoserine. Residues 300–353 (ELKLVKDIEEMKLKVDALESKLKQADSTISKLMEERSISSQHRQSLQHELAELR) are a coiled coil. The chain crosses the membrane as a helical; Anchor for type IV membrane protein span at residues 364 to 384 (GFPLLYVCVVAFIAYVIGHFL).

It belongs to the VAMP-associated protein (VAP) (TC 9.B.17) family. In terms of assembly, interacts with cowpea mosaic virus (CPMV) NTP-binding protein (NTB).

It localises to the endoplasmic reticulum membrane. May play a role in vesicle trafficking. The protein is Vesicle-associated protein 2-2 (PVA22) of Arabidopsis thaliana (Mouse-ear cress).